Consider the following 309-residue polypeptide: Probable cell wall protein PGA50 (309 aa).

Positions 1–17 are cleaved as a signal peptide; the sequence is MKLNLLLLLFIVELVAA. N67, N115, N248, N267, and N277 each carry an N-linked (GlcNAc...) asparagine glycan. Positions 241–281 are disordered; sequence STTTFSSNGTSSGTTNGDTRAETKSSNSTQTSSSDKNSSQI. S286 carries GPI-anchor amidated serine lipidation. Positions 287-309 are cleaved as a propeptide — removed in mature form; the sequence is TGVANFVASFGMGTLLLFVLSLC.

Belongs to the IHD1 family. Post-translationally, the GPI-anchor is attached to the protein in the endoplasmic reticulum and serves to target the protein to the cell surface. There, the glucosamine-inositol phospholipid moiety is cleaved off and the GPI-modified mannoprotein is covalently attached via its lipidless GPI glycan remnant to the 1,6-beta-glucan of the outer cell wall layer.

Its subcellular location is the secreted. The protein resides in the cell wall. It localises to the membrane. Probable GPI-anchored cell wall protein that may be involved in cell wall organization, hyphal growth, as well as in virulence. The sequence is that of Probable cell wall protein PGA50 (PGA50) from Candida albicans (strain SC5314 / ATCC MYA-2876) (Yeast).